A 940-amino-acid polypeptide reads, in one-letter code: MPQDKIVIHGAREHNLKNIDVEIPRDKLVVVTGVSGSGKSSLAFETLYAEGQRRYVESLSAYARQFLGNMDKPDVDSIDGLSPAISIDQKTTSKNPRSTVGTVTEINDYLRLLYARVGTPYCVNGHGKISAQSVEEIVEQILELPEKTRLQILAPVVRTKKGTHVKMFERIQKDGYVRVRVDGEVYDISEVPELDKNKKHNIEIVIDRIVVKEGIRSRLFDSVEAALHQAEGYVIVDKMDGSELLFSEFYACPVCGFTVPELEPRLFSFNAPFGSCPDCDGLGVKLEPDVDLLIPDTSKTLREGAIIYWYGKASTYYPALLEQAMEQFGIDLDRPWEKLSEKEQQIVLYGNGDKLFHFLHEGDFGLRDQDMTFVGVIPNLWRRYRSGMSESAREMARSYMTELTCTTCHGYRLNDQALSVKVGEKNIAEFSILSIGDTLDYVKSLVLSANNEIIAKPILKEIKDRLTFLKNVGLDYLTLSRSSGTLSGGESQRIRLATQIGSNLSGVLYILDEPSIGLHQRDNDRLIESLQKMRDLGNTLIVVEHDEDTMMAADWLIDVGPGAGDLGGEIIASGTPKQVMKNKKSLTGQYLSGKRAIPVPEKRRAIDKKKMVKITGASENNLQNLDVEFPMGVMTAVTGVSGSGKSTLVNSILKKSLAQKLNHNSEKPGKHKKITGYEGIERLIDIDQSPIGRTPRSNPATYTSVFDDIRDLFANTNEAKIRGYKKGRFSFNVKGGRCEACSGDGIIKIEMHFLPDVYVPCEVCHGRRYNSETLEVHYKGKNISEVLDMRVSDGLEFFRHIPKIERKLQTIVDVGLGYVTLGQSATTLSGGEAQRMKLASELQKRSNGKAFYILDEPTTGLHSEDIATLIQVLDRLVEQGNTIVVIEHNLDVIKTADYIIDLGPEGGAGGGTILAKGRPEEVAKVADSYTGQYLKAKLEK.

Position 33–40 (33–40 (GVSGSGKS)) interacts with ATP. The C4-type zinc finger occupies 252 to 279 (CPVCGFTVPELEPRLFSFNAPFGSCPDC). ABC transporter domains are found at residues 309–586 (WYGK…KKSL) and 606–935 (IDKK…QYLK). 639-646 (GVSGSGKS) is an ATP binding site. A C4-type zinc finger spans residues 738–764 (CEACSGDGIIKIEMHFLPDVYVPCEVC).

This sequence belongs to the ABC transporter superfamily. UvrA family. As to quaternary structure, forms a heterotetramer with UvrB during the search for lesions.

It is found in the cytoplasm. The UvrABC repair system catalyzes the recognition and processing of DNA lesions. UvrA is an ATPase and a DNA-binding protein. A damage recognition complex composed of 2 UvrA and 2 UvrB subunits scans DNA for abnormalities. When the presence of a lesion has been verified by UvrB, the UvrA molecules dissociate. The sequence is that of UvrABC system protein A from Lactococcus lactis subsp. lactis (strain IL1403) (Streptococcus lactis).